A 506-amino-acid polypeptide reads, in one-letter code: Hippocampus abundant transcript-like protein 1 (506 aa).

Residues Met1 to Lys25 form a disordered region. Over Met1–Ala49 the chain is Extracellular. The chain crosses the membrane as a helical span at residues Ile50–Leu70. The Cytoplasmic segment spans residues His71–Asn82. The chain crosses the membrane as a helical span at residues Gly83–Leu103. The Extracellular portion of the chain corresponds to Ser104–Pro111. A helical membrane pass occupies residues Phe112–Trp132. The Cytoplasmic segment spans residues Trp133–Tyr134. Residues Phe135–Val155 traverse the membrane as a helical segment. The Extracellular portion of the chain corresponds to Ala156 to Tyr168. The chain crosses the membrane as a helical span at residues Gly169–Leu189. The Cytoplasmic segment spans residues Ser190–Ser196. The helical transmembrane segment at Leu197–Val217 threads the bilayer. Over Pro218 to Leu255 the chain is Extracellular. Residues Leu256 to Phe276 form a helical membrane-spanning segment. Residues Leu277–Gln281 lie on the Cytoplasmic side of the membrane. A helical transmembrane segment spans residues Val282–Ile302. The Extracellular portion of the chain corresponds to Val303–Lys319. Residues Asn320–Ser340 form a helical membrane-spanning segment. Position 341 (Gln341) is a topological domain, cytoplasmic. A helical transmembrane segment spans residues Ala342–Ile362. The Extracellular segment spans residues Ser363–Gly387. The chain crosses the membrane as a helical span at residues Leu388–Leu408. Residues Thr409 to Pro428 lie on the Cytoplasmic side of the membrane. The chain crosses the membrane as a helical span at residues Gly429 to Ile449. Topologically, residues Pro450–Leu506 are extracellular. Residues Gly457–Ile481 are disordered. Over residues Gln459–Glu474 the composition is skewed to polar residues. Asn463 is a glycosylation site (N-linked (GlcNAc...) asparagine).

It belongs to the major facilitator superfamily.

It is found in the membrane. In Homo sapiens (Human), this protein is Hippocampus abundant transcript-like protein 1.